The sequence spans 281 residues: ATP synthase gamma chain (281 aa).

The protein belongs to the ATPase gamma chain family. In terms of assembly, F-type ATPases have 2 components, CF(1) - the catalytic core - and CF(0) - the membrane proton channel. CF(1) has five subunits: alpha(3), beta(3), gamma(1), delta(1), epsilon(1). CF(0) has three main subunits: a, b and c.

Its subcellular location is the cell membrane. In terms of biological role, produces ATP from ADP in the presence of a proton gradient across the membrane. The gamma chain is believed to be important in regulating ATPase activity and the flow of protons through the CF(0) complex. The protein is ATP synthase gamma chain of Desulfitobacterium hafniense (strain DSM 10664 / DCB-2).